We begin with the raw amino-acid sequence, 71 residues long: Exodeoxyribonuclease 7 small subunit (71 aa).

The protein belongs to the XseB family. In terms of assembly, heterooligomer composed of large and small subunits.

Its subcellular location is the cytoplasm. The catalysed reaction is Exonucleolytic cleavage in either 5'- to 3'- or 3'- to 5'-direction to yield nucleoside 5'-phosphates.. Its function is as follows. Bidirectionally degrades single-stranded DNA into large acid-insoluble oligonucleotides, which are then degraded further into small acid-soluble oligonucleotides. The polypeptide is Exodeoxyribonuclease 7 small subunit (Clostridium botulinum (strain Loch Maree / Type A3)).